The primary structure comprises 356 residues: CMP-sialic acid transporter 2 (356 aa).

Residues 1–24 (MEYRRVKDQESYDVVSQKDIESPG) are compositionally biased toward basic and acidic residues. The tract at residues 1–44 (MEYRRVKDQESYDVVSQKDIESPGERSLSSTSATSSLSTAGASK) is disordered. At 1-52 (MEYRRVKDQESYDVVSQKDIESPGERSLSSTSATSSLSTAGASKGKNSWKLK) the chain is on the cytoplasmic side. Positions 27-44 (SLSSTSATSSLSTAGASK) are enriched in low complexity. A helical transmembrane segment spans residues 53-73 (SIVTLALTLLTSSQAILIVWS). Topologically, residues 74–82 (KRAGKYEYS) are lumenal. Residues 83-103 (VTTANFSVEALKCLLSLIALY) form a helical membrane-spanning segment. Residues 104-125 (RTWNSQGVTEDNRLSTSFDEVS) are Cytoplasmic-facing. A helical transmembrane segment spans residues 126–146 (VYPIPAILYMVKNLLQYYIFA). Residues 147-149 (YVD) lie on the Lumenal side of the membrane. A helical membrane pass occupies residues 150–172 (APAYQILKNLNIISTGVLYRIIL). Topologically, residues 173-175 (KKK) are cytoplasmic. Residues 176 to 196 (LSEIQWAAFILLCAGCTTAQL) traverse the membrane as a helical segment. The Lumenal portion of the chain corresponds to 197 to 211 (NPSSDHVLQTPIQGW). Residues 212 to 232 (VMAIVMALLSGFAGVYTEAII) form a helical membrane-spanning segment. At 233-239 (KKRPSRN) the chain is on the cytoplasmic side. Residues 240-260 (INVQNFWLYIFGMLFNLVAIC) form a helical membrane-spanning segment. The Lumenal portion of the chain corresponds to 261 to 277 (VQDFDAVMNKGFFHGYS). Residues 278–298 (FITVLMILNHALSGIAVSMVM) traverse the membrane as a helical segment. Topologically, residues 299 to 314 (KYADNIVKVYSTSVAM) are cytoplasmic. Residues 315-335 (LLTAVVSVFLFGFHLSLAFFL) traverse the membrane as a helical segment. Over 336–356 (GSTVVSVSVYLHSVGKPQPQK) the chain is Lumenal.

Belongs to the nucleotide-sugar transporter family. CMP-Sialate:CMP antiporter (TC 2.A.7.12) subfamily. As to expression, expressed in roots, leaves and stalks.

It is found in the golgi apparatus membrane. Functionally, sugar transporter involved in the transport of CMP-sialic acid from the cytoplasm into the Golgi. May transport important nucleotide sugars such as CMP-Kdo (2-keto-3-deoxy-D-manno-octulosonic acid) in physiological conditions. The sequence is that of CMP-sialic acid transporter 2 from Oryza sativa subsp. japonica (Rice).